The chain runs to 218 residues: E3 ubiquitin-protein ligase MARCHF3 (218 aa).

Residues serine 63 to glutamate 123 form an RING-CH-type zinc finger. Zn(2+)-binding residues include cysteine 71, cysteine 74, cysteine 87, cysteine 89, histidine 97, cysteine 100, cysteine 113, and cysteine 116. 2 consecutive transmembrane segments (helical) span residues leucine 145 to leucine 165 and leucine 180 to threonine 200.

As to quaternary structure, interacts with MARCHF2 and STX6.

Its subcellular location is the cytoplasmic vesicle membrane. It localises to the early endosome membrane. It carries out the reaction S-ubiquitinyl-[E2 ubiquitin-conjugating enzyme]-L-cysteine + [acceptor protein]-L-lysine = [E2 ubiquitin-conjugating enzyme]-L-cysteine + N(6)-ubiquitinyl-[acceptor protein]-L-lysine.. It participates in protein modification; protein ubiquitination. Functionally, E3 ubiquitin-protein ligase which may be involved in endosomal trafficking. E3 ubiquitin ligases accept ubiquitin from an E2 ubiquitin-conjugating enzyme in the form of a thioester and then directly transfer the ubiquitin to targeted substrates. The chain is E3 ubiquitin-protein ligase MARCHF3 (Marchf3) from Mus musculus (Mouse).